Consider the following 561-residue polypeptide: Acyl-CoA ligase frbB (561 aa).

ATP-binding positions include 213–221 (TSGTSGAQK), 354–359 (PGWGLT), Asp-437, Arg-456, and Lys-551. The segment at 284–354 (DLKRVLGSIA…TLRPKWHLQP (71 aa)) is SBD1. Residues 355–417 (GWGLTEGGGA…MKSPSVIAGY (63 aa)) form an SBD2 region.

The protein belongs to the ATP-dependent AMP-binding enzyme family.

It participates in antifungal biosynthesis. Functionally, acyl-CoA ligase; part of the gene cluster that mediates the biosynthesis of the antifungal antibiotic FR901469, an inhibitor of beta-1,3-glucansynthase, exerting antifungal activity against the pathogenes Candida albicans and Aspergillus fumigatus. FR901469 is a cyclic depsipeptide containing 12 amino acid residues and a fatty acid chain. The NRPS frbI contains 12 modules responsible for the formation of the depsipeptide backbone which is denoted as Acyl-Thr-Ala-Tyr-Val-4OHPro-Thr-Thr-3OHPro-threo3OHGln-Gly-Thr-Orn-OH (C71H116N14O23). The PKS frbB is probably involved in the production of the hydrocarbon chain, and the acyl-CoA ligase frbC might be involved in the transport of the chain to the peptide ptoduct of frbI. Because FR901469 contains 3 hydroxylated amino acid residues, the 3 oxygenases frbA, frbH, and frbJ might be participating in amino acid hydroxylation. As no thioesterase domains were detected in frbI or frbB, the thioesterases frbD and frbE may instead release and cyclize the products of the NRPS and PKS, respectively. The protein is Acyl-CoA ligase frbB of Dothideomycetidae sp. (strain 11243) (Fungal sp. (strain No.11243)).